The chain runs to 347 residues: NADH-ubiquinone oxidoreductase chain 2 (347 aa).

10 consecutive transmembrane segments (helical) span residues 13 to 33, 59 to 79, 96 to 116, 122 to 142, 149 to 169, 178 to 198, 201 to 221, 247 to 267, 274 to 294, and 323 to 343; these read IILG…WIGF, YFLT…TNLL, AVMT…FWVP, IPLS…LSVL, VSPT…GWGG, ILAY…AYNP, TLLN…LFMF, IMLS…WMII, ESLL…YFYM, and VPLL…APAL.

Belongs to the complex I subunit 2 family. In terms of assembly, core subunit of respiratory chain NADH dehydrogenase (Complex I) which is composed of 45 different subunits. Interacts with TMEM242.

The protein resides in the mitochondrion inner membrane. The catalysed reaction is a ubiquinone + NADH + 5 H(+)(in) = a ubiquinol + NAD(+) + 4 H(+)(out). In terms of biological role, core subunit of the mitochondrial membrane respiratory chain NADH dehydrogenase (Complex I) which catalyzes electron transfer from NADH through the respiratory chain, using ubiquinone as an electron acceptor. Essential for the catalytic activity and assembly of complex I. This Megaderma spasma (Lesser false vampire bat) protein is NADH-ubiquinone oxidoreductase chain 2.